A 777-amino-acid chain; its full sequence is Intraflagellar transport protein 80 homolog (777 aa).

WD repeat units lie at residues 12 to 50, 104 to 143, 145 to 185, 186 to 225, 227 to 265, 267 to 306, and 504 to 542; these read KHQELVSCVGWTTAEELYSCSDDHQIVKWNLLTSETSLI, AHCGAVLAGRWNYEGTALVTVGEDGQVKIWSKTGMLRSTL, QQGI…LQWK, AHDGIILKVDWNSVNDLILSAGEDCKYKVWDSYGRVLYGS, PHEHPITSVAWAPDGELFAVGSFHTLRLCDKTGWSYALE, PNTGSIFNIAWSIDGTQIAGACGNGHVVFAHVVEQRWEWK, and KLGTMVHTLAWCDTCNILCGLQDTRFTVWYYPNAVYVDR. A disordered region spans residues 758-777; sequence TKERDRSSSGQSSKNTGLKP. Positions 765 to 777 are enriched in polar residues; the sequence is SSGQSSKNTGLKP.

Component of the IFT complex B, at least composed of IFT20, IFT22, IFT25, IFT27, IFT46, IFT52, TRAF3IP1/IFT54, IFT57, IFT74, IFT80, IFT81, and IFT88. Interacts with IFT88. Interacts with IFT57 and IFT70B.

Its subcellular location is the cytoplasm. It is found in the cytoskeleton. The protein localises to the cilium basal body. It localises to the cilium axoneme. Functionally, component of the intraflagellar transport (IFT) complex B, which is essential for the development and maintenance of motile and sensory cilia. The chain is Intraflagellar transport protein 80 homolog (Ift80) from Rattus norvegicus (Rat).